A 332-amino-acid polypeptide reads, in one-letter code: Elongin-A (332 aa).

Positions 24 to 68 (LEDIGHMPYALVRRVLLKMSAEQLLRLERASPALLLEDEEAWQQL) constitute an F-box domain. Residues 228–332 (TPSAQPAASL…KPRVYIHTPR (105 aa)) form a disordered region. The span at 296–309 (LFSSPALSTLLPQQ) shows a compositional bias: polar residues. The segment covering 320 to 332 (PPKKPRVYIHTPR) has biased composition (basic residues).

It belongs to the ELA1 family. Heterodimer with ELC1. Component of a CRL3 E3 ubiquitin ligase complex consisting of a cullin, the linker protein ELC1, the substrate receptor ELA1, and a RING protein. Interacts with the large RNA polymerase II subunit RPO21 in a manner dependent on DEF1.

Its function is as follows. As part of the CRL3 E3 ubiquitin ligase complex; polyubiquitylates monoubiquitylated RNA polymerase II subunit RPO21 to trigger its proteolysis; plays a role in global genomic repair. The chain is Elongin-A (ELA1) from Eremothecium gossypii (strain ATCC 10895 / CBS 109.51 / FGSC 9923 / NRRL Y-1056) (Yeast).